The primary structure comprises 76 residues: Bowman-Birk type proteinase inhibitor DE-3 (76 aa).

7 cysteine pairs are disulfide-bonded: Cys16–Cys70, Cys17–Cys32, Cys20–Cys66, Cys22–Cys30, Cys40–Cys47, Cys44–Cys59, and Cys49–Cys57.

Belongs to the Bowman-Birk serine protease inhibitor family.

The polypeptide is Bowman-Birk type proteinase inhibitor DE-3 (Macrotyloma axillare (Perennial horse gram)).